We begin with the raw amino-acid sequence, 661 residues long: Heme transporter BhuA (661 aa).

Positions 1-23 (MKFTRTLVLASTSLLATVATSQA) are cleaved as a signal peptide. The 112-residue stretch at 48 to 159 (KDNIEATGGT…AAGAIRYETV (112 aa)) folds into the TBDR plug domain. One can recognise a TBDR beta-barrel domain in the interval 170–661 (TFGARIIGSY…TFTFQTAFKF (492 aa)).

Belongs to the TonB-dependent receptor family.

The protein resides in the cell outer membrane. Functionally, heme transporter. In Brucella ovis (strain ATCC 25840 / 63/290 / NCTC 10512), this protein is Heme transporter BhuA (bhuA).